The sequence spans 180 residues: MRILGIDPGLRVTGFGVIDVSGHQLAYVASGVIKTPTADLPTRLGTIYDGVSTLIREHTPDQAAIEKVFVNVNPQSTLLLGQARGAAICGLVSGGLPVAEYTALQLKQAVVGYGRATKEQMQEMVAQLLSLSGRPGTDAADALGMAICHAHGGNTLNTLGGIAPALAKKGLRVRRGRLVG.

Residues Asp7, Glu66, and Asp138 contribute to the active site. Residues Asp7, Glu66, and Asp138 each contribute to the Mg(2+) site.

This sequence belongs to the RuvC family. In terms of assembly, homodimer which binds Holliday junction (HJ) DNA. The HJ becomes 2-fold symmetrical on binding to RuvC with unstacked arms; it has a different conformation from HJ DNA in complex with RuvA. In the full resolvosome a probable DNA-RuvA(4)-RuvB(12)-RuvC(2) complex forms which resolves the HJ. It depends on Mg(2+) as a cofactor.

It is found in the cytoplasm. It carries out the reaction Endonucleolytic cleavage at a junction such as a reciprocal single-stranded crossover between two homologous DNA duplexes (Holliday junction).. In terms of biological role, the RuvA-RuvB-RuvC complex processes Holliday junction (HJ) DNA during genetic recombination and DNA repair. Endonuclease that resolves HJ intermediates. Cleaves cruciform DNA by making single-stranded nicks across the HJ at symmetrical positions within the homologous arms, yielding a 5'-phosphate and a 3'-hydroxyl group; requires a central core of homology in the junction. The consensus cleavage sequence is 5'-(A/T)TT(C/G)-3'. Cleavage occurs on the 3'-side of the TT dinucleotide at the point of strand exchange. HJ branch migration catalyzed by RuvA-RuvB allows RuvC to scan DNA until it finds its consensus sequence, where it cleaves and resolves the cruciform DNA. The polypeptide is Crossover junction endodeoxyribonuclease RuvC (Burkholderia pseudomallei (strain 668)).